The primary structure comprises 869 residues: Valine--tRNA ligase (869 aa).

A 'HIGH' region motif is present at residues 47 to 57 (PYPTGNFHIGN). The 'KMSKS' region motif lies at 521 to 525 (KMSKS). Position 524 (Lys-524) interacts with ATP.

This sequence belongs to the class-I aminoacyl-tRNA synthetase family. ValS type 2 subfamily.

The protein resides in the cytoplasm. It catalyses the reaction tRNA(Val) + L-valine + ATP = L-valyl-tRNA(Val) + AMP + diphosphate. Its function is as follows. Catalyzes the attachment of valine to tRNA(Val). As ValRS can inadvertently accommodate and process structurally similar amino acids such as threonine, to avoid such errors, it has a 'posttransfer' editing activity that hydrolyzes mischarged Thr-tRNA(Val) in a tRNA-dependent manner. In Methanosarcina acetivorans (strain ATCC 35395 / DSM 2834 / JCM 12185 / C2A), this protein is Valine--tRNA ligase.